A 509-amino-acid polypeptide reads, in one-letter code: Hexokinase-4, chloroplastic (509 aa).

Residues 1–37 (MSAAAAIASPIPAAIAVVQQQRRGRSRGGGSGAAAVR) constitute a chloroplast transit peptide. Residues 45 to 496 (SAIAPILADL…SGIGAALLAA (452 aa)) enclose the Hexokinase domain. The tract at residues 100-238 (TGNETGLFYA…GLDMRVSALV (139 aa)) is hexokinase small subdomain. ADP-binding residues include Gly-114, Thr-115, and Asn-116. D-glucose-binding residues include Thr-204, Lys-205, Asn-239, and Asp-240. The tract at residues 239 to 485 (NDTVGTLAGA…NRIAIEHTKD (247 aa)) is hexokinase large subdomain. Thr-263 contributes to the ADP binding site. Asn-266, Glu-294, and Glu-324 together coordinate D-glucose. Position 450 (Gly-450) interacts with ADP.

It belongs to the hexokinase family. In terms of tissue distribution, expressed in roots, leaves, flowers, immature seeds, endosperm and seed coat.

The protein resides in the plastid. It is found in the chloroplast stroma. It carries out the reaction a D-hexose + ATP = a D-hexose 6-phosphate + ADP + H(+). The enzyme catalyses D-fructose + ATP = D-fructose 6-phosphate + ADP + H(+). The catalysed reaction is D-glucose + ATP = D-glucose 6-phosphate + ADP + H(+). It participates in carbohydrate metabolism; hexose metabolism. It functions in the pathway carbohydrate degradation; glycolysis; D-glyceraldehyde 3-phosphate and glycerone phosphate from D-glucose: step 1/4. Its function is as follows. Fructose and glucose phosphorylating enzyme. This is Hexokinase-4, chloroplastic (HXK4) from Oryza sativa subsp. japonica (Rice).